Here is a 371-residue protein sequence, read N- to C-terminus: MSLEPFIDSKPFTFGVELEMQIVNTHDYDLTKAGSDLLRLIKDEKIPGNITPEITESMIELSTGICTTHEQAVTDLRKIRDTLVSAADHLNVGLCGGGTHAFQQWSERQIVDTPRFQYLSELYGYLAKQFTVFGQHVHIGCPDPNSALYLLHSMSRFIPHFIALSASSPFVQGVDTGFHSARLNSVFAFPLSGRAPFVLTWDSFEEYFSKMVHTGVVNSMKDFYWDIRPKPGFGTIEVRVMDTPLSVDRAAAIACYIQTLARHLLLDKPIAPQEDDYLVYTFNRFEACRFGLAGTCINPQTGERKTISEDILETLDLIAPHAEALGSGNALAEIGAIARGQVNDATWLRGVVEREKSLHEAVRQQCLQWRA.

The protein belongs to the glutamate--cysteine ligase type 2 family. YbdK subfamily.

The catalysed reaction is L-cysteine + L-glutamate + ATP = gamma-L-glutamyl-L-cysteine + ADP + phosphate + H(+). Functionally, ATP-dependent carboxylate-amine ligase which exhibits weak glutamate--cysteine ligase activity. This chain is Putative glutamate--cysteine ligase 2, found in Paraburkholderia phytofirmans (strain DSM 17436 / LMG 22146 / PsJN) (Burkholderia phytofirmans).